A 478-amino-acid polypeptide reads, in one-letter code: Protein nucleotidyltransferase YdiU (478 aa).

The ATP site is built by glycine 84, glycine 86, arginine 87, lysine 107, aspartate 119, glycine 120, arginine 170, and arginine 177. Aspartate 246 serves as the catalytic Proton acceptor. Mg(2+)-binding residues include asparagine 247 and aspartate 256. Aspartate 256 provides a ligand contact to ATP.

Belongs to the SELO family. The cofactor is Mg(2+). Mn(2+) serves as cofactor.

It catalyses the reaction L-seryl-[protein] + ATP = 3-O-(5'-adenylyl)-L-seryl-[protein] + diphosphate. It carries out the reaction L-threonyl-[protein] + ATP = 3-O-(5'-adenylyl)-L-threonyl-[protein] + diphosphate. The enzyme catalyses L-tyrosyl-[protein] + ATP = O-(5'-adenylyl)-L-tyrosyl-[protein] + diphosphate. The catalysed reaction is L-histidyl-[protein] + UTP = N(tele)-(5'-uridylyl)-L-histidyl-[protein] + diphosphate. It catalyses the reaction L-seryl-[protein] + UTP = O-(5'-uridylyl)-L-seryl-[protein] + diphosphate. It carries out the reaction L-tyrosyl-[protein] + UTP = O-(5'-uridylyl)-L-tyrosyl-[protein] + diphosphate. Its function is as follows. Nucleotidyltransferase involved in the post-translational modification of proteins. It can catalyze the addition of adenosine monophosphate (AMP) or uridine monophosphate (UMP) to a protein, resulting in modifications known as AMPylation and UMPylation. The sequence is that of Protein nucleotidyltransferase YdiU from Escherichia coli (strain SE11).